The sequence spans 90 residues: Small ribosomal subunit protein bS16 (90 aa).

This sequence belongs to the bacterial ribosomal protein bS16 family.

This chain is Small ribosomal subunit protein bS16, found in Anoxybacillus flavithermus (strain DSM 21510 / WK1).